Here is a 297-residue protein sequence, read N- to C-terminus: Light-independent protochlorophyllide reductase iron-sulfur ATP-binding protein (297 aa).

Residues 41–46 (GIGKST) and lysine 70 each bind ATP. Serine 45 is a Mg(2+) binding site. [4Fe-4S] cluster-binding residues include cysteine 126 and cysteine 160. Residues 211-212 (NR) and 235-237 (PDL) each bind ATP.

This sequence belongs to the NifH/BchL/ChlL family. As to quaternary structure, homodimer. Protochlorophyllide reductase is composed of three subunits; BchL, BchN and BchB. It depends on [4Fe-4S] cluster as a cofactor.

It catalyses the reaction chlorophyllide a + oxidized 2[4Fe-4S]-[ferredoxin] + 2 ADP + 2 phosphate = protochlorophyllide a + reduced 2[4Fe-4S]-[ferredoxin] + 2 ATP + 2 H2O. Its pathway is porphyrin-containing compound metabolism; bacteriochlorophyll biosynthesis (light-independent). Component of the dark-operative protochlorophyllide reductase (DPOR) that uses Mg-ATP and reduced ferredoxin to reduce ring D of protochlorophyllide (Pchlide) to form chlorophyllide a (Chlide). This reaction is light-independent. The L component serves as a unique electron donor to the NB-component of the complex, and binds Mg-ATP. This chain is Light-independent protochlorophyllide reductase iron-sulfur ATP-binding protein, found in Methylobacterium radiotolerans (strain ATCC 27329 / DSM 1819 / JCM 2831 / NBRC 15690 / NCIMB 10815 / 0-1).